We begin with the raw amino-acid sequence, 113 residues long: Hydrogenase maturation factor HybF (113 aa).

His-2 and Glu-3 together coordinate Ni(2+). Zn(2+) contacts are provided by Cys-73, Cys-76, Cys-89, and Cys-92.

The protein belongs to the HypA/HybF family. HybF subfamily.

In terms of biological role, involved in the maturation of [NiFe] hydrogenases. Required for nickel insertion into the metal center of the hydrogenase. This is Hydrogenase maturation factor HybF from Morganella morganii (Proteus morganii).